Here is a 945-residue protein sequence, read N- to C-terminus: Leucine--tRNA ligase 1 (945 aa).

Positions 42–52 (PYTNSPLHIGH) match the 'HIGH' region motif. The 'KMSKS' region signature appears at 625–629 (KMSKS). Position 628 (lysine 628) interacts with ATP.

Belongs to the class-I aminoacyl-tRNA synthetase family.

It is found in the cytoplasm. The enzyme catalyses tRNA(Leu) + L-leucine + ATP = L-leucyl-tRNA(Leu) + AMP + diphosphate. This is Leucine--tRNA ligase 1 from Sulfurisphaera tokodaii (strain DSM 16993 / JCM 10545 / NBRC 100140 / 7) (Sulfolobus tokodaii).